The chain runs to 387 residues: LL-diaminopimelate aminotransferase (387 aa).

Positions 14 and 39 each coordinate substrate. Residues Tyr68, 102–103 (SK), Tyr127, Asn177, Tyr208, and 236–238 (SLS) contribute to the pyridoxal 5'-phosphate site. 3 residues coordinate substrate: Lys103, Tyr127, and Asn177. An N6-(pyridoxal phosphate)lysine modification is found at Lys239. Pyridoxal 5'-phosphate is bound at residue Arg247. Arg365 provides a ligand contact to substrate.

This sequence belongs to the class-I pyridoxal-phosphate-dependent aminotransferase family. LL-diaminopimelate aminotransferase subfamily. As to quaternary structure, homodimer. Pyridoxal 5'-phosphate serves as cofactor.

It catalyses the reaction (2S,6S)-2,6-diaminopimelate + 2-oxoglutarate = (S)-2,3,4,5-tetrahydrodipicolinate + L-glutamate + H2O + H(+). Its pathway is amino-acid biosynthesis; L-lysine biosynthesis via DAP pathway; LL-2,6-diaminopimelate from (S)-tetrahydrodipicolinate (aminotransferase route): step 1/1. Its function is as follows. Involved in the synthesis of meso-diaminopimelate (m-DAP or DL-DAP), required for both lysine and peptidoglycan biosynthesis. Catalyzes the direct conversion of tetrahydrodipicolinate to LL-diaminopimelate. The sequence is that of LL-diaminopimelate aminotransferase from Aquifex aeolicus (strain VF5).